Consider the following 472-residue polypeptide: Ribulose bisphosphate carboxylase large chain (472 aa).

Positions 116 and 166 each coordinate substrate. Lysine 168 acts as the Proton acceptor in catalysis. Residue lysine 170 coordinates substrate. 3 residues coordinate Mg(2+): lysine 194, aspartate 196, and glutamate 197. Lysine 194 bears the N6-carboxylysine mark. Catalysis depends on histidine 287, which acts as the Proton acceptor. Residues arginine 288, histidine 320, and serine 372 each contribute to the substrate site.

This sequence belongs to the RuBisCO large chain family. Type I subfamily. Heterohexadecamer of 8 large chains and 8 small chains. Requires Mg(2+) as cofactor.

The enzyme catalyses 2 (2R)-3-phosphoglycerate + 2 H(+) = D-ribulose 1,5-bisphosphate + CO2 + H2O. It carries out the reaction D-ribulose 1,5-bisphosphate + O2 = 2-phosphoglycolate + (2R)-3-phosphoglycerate + 2 H(+). RuBisCO catalyzes two reactions: the carboxylation of D-ribulose 1,5-bisphosphate, the primary event in carbon dioxide fixation, as well as the oxidative fragmentation of the pentose substrate. Both reactions occur simultaneously and in competition at the same active site. The chain is Ribulose bisphosphate carboxylase large chain from Nitrobacter vulgaris.